The primary structure comprises 308 residues: ADP-L-glycero-D-manno-heptose-6-epimerase (308 aa).

NADP(+) contacts are provided by residues 10-11 (FI), 31-32 (DN), Lys38, Lys53, 75-79 (EGACS), and Asn92. Tyr139 (proton acceptor) is an active-site residue. Lys143 contacts NADP(+). Substrate is bound at residue Asn168. Residues Val169 and Lys177 each coordinate NADP(+). The active-site Proton acceptor is the Lys177. Residues Ser179, His186, 200–203 (FAGS), Arg208, and Tyr271 each bind substrate.

It belongs to the NAD(P)-dependent epimerase/dehydratase family. HldD subfamily. In terms of assembly, homopentamer. It depends on NADP(+) as a cofactor.

The enzyme catalyses ADP-D-glycero-beta-D-manno-heptose = ADP-L-glycero-beta-D-manno-heptose. It participates in nucleotide-sugar biosynthesis; ADP-L-glycero-beta-D-manno-heptose biosynthesis; ADP-L-glycero-beta-D-manno-heptose from D-glycero-beta-D-manno-heptose 7-phosphate: step 4/4. Its function is as follows. Catalyzes the interconversion between ADP-D-glycero-beta-D-manno-heptose and ADP-L-glycero-beta-D-manno-heptose via an epimerization at carbon 6 of the heptose. The sequence is that of ADP-L-glycero-D-manno-heptose-6-epimerase from Haemophilus influenzae (strain 86-028NP).